A 348-amino-acid polypeptide reads, in one-letter code: Probable dual-specificity RNA methyltransferase RlmN (348 aa).

Glu93 serves as the catalytic Proton acceptor. Residues 99 to 323 enclose the Radical SAM core domain; the sequence is TEKRLTACLS…QTRLSNSGIN (225 aa). A disulfide bond links Cys106 and Cys338. [4Fe-4S] cluster-binding residues include Cys113, Cys117, and Cys120. S-adenosyl-L-methionine-binding positions include 160-161, Ser190, 219-221, and Asn295; these read GE and SLH. Cys338 serves as the catalytic S-methylcysteine intermediate.

It belongs to the radical SAM superfamily. RlmN family. [4Fe-4S] cluster serves as cofactor.

Its subcellular location is the cytoplasm. It carries out the reaction adenosine(2503) in 23S rRNA + 2 reduced [2Fe-2S]-[ferredoxin] + 2 S-adenosyl-L-methionine = 2-methyladenosine(2503) in 23S rRNA + 5'-deoxyadenosine + L-methionine + 2 oxidized [2Fe-2S]-[ferredoxin] + S-adenosyl-L-homocysteine. The catalysed reaction is adenosine(37) in tRNA + 2 reduced [2Fe-2S]-[ferredoxin] + 2 S-adenosyl-L-methionine = 2-methyladenosine(37) in tRNA + 5'-deoxyadenosine + L-methionine + 2 oxidized [2Fe-2S]-[ferredoxin] + S-adenosyl-L-homocysteine. In terms of biological role, specifically methylates position 2 of adenine 2503 in 23S rRNA and position 2 of adenine 37 in tRNAs. The polypeptide is Probable dual-specificity RNA methyltransferase RlmN (Prochlorococcus marinus subsp. pastoris (strain CCMP1986 / NIES-2087 / MED4)).